The primary structure comprises 571 residues: Isocitrate dehydrogenase kinase/phosphatase (571 aa).

Residues 318 to 324 and Lys339 each bind ATP; that span reads APGVRGM. The active site involves Asp374.

Belongs to the AceK family.

Its subcellular location is the cytoplasm. It carries out the reaction L-seryl-[isocitrate dehydrogenase] + ATP = O-phospho-L-seryl-[isocitrate dehydrogenase] + ADP + H(+). Bifunctional enzyme which can phosphorylate or dephosphorylate isocitrate dehydrogenase (IDH) on a specific serine residue. This is a regulatory mechanism which enables bacteria to bypass the Krebs cycle via the glyoxylate shunt in response to the source of carbon. When bacteria are grown on glucose, IDH is fully active and unphosphorylated, but when grown on acetate or ethanol, the activity of IDH declines drastically concomitant with its phosphorylation. The protein is Isocitrate dehydrogenase kinase/phosphatase of Pseudomonas putida (strain ATCC 700007 / DSM 6899 / JCM 31910 / BCRC 17059 / LMG 24140 / F1).